The following is a 402-amino-acid chain: S-adenosylmethionine synthase (402 aa).

Position 16 (histidine 16) interacts with ATP. Aspartate 18 provides a ligand contact to Mg(2+). Glutamate 44 contributes to the K(+) binding site. Glutamate 57 and glutamine 103 together coordinate L-methionine. The tract at residues 103-113 is flexible loop; sequence QSPDIAQGVDT. Residues 178-180, 249-250, aspartate 258, 264-265, alanine 281, and lysine 285 contribute to the ATP site; these read DGK, KF, and RK. An L-methionine-binding site is contributed by aspartate 258. Position 289 (lysine 289) interacts with L-methionine.

This sequence belongs to the AdoMet synthase family. Homotetramer; dimer of dimers. Mg(2+) is required as a cofactor. Requires K(+) as cofactor.

The protein localises to the cytoplasm. The catalysed reaction is L-methionine + ATP + H2O = S-adenosyl-L-methionine + phosphate + diphosphate. Its pathway is amino-acid biosynthesis; S-adenosyl-L-methionine biosynthesis; S-adenosyl-L-methionine from L-methionine: step 1/1. Catalyzes the formation of S-adenosylmethionine (AdoMet) from methionine and ATP. The overall synthetic reaction is composed of two sequential steps, AdoMet formation and the subsequent tripolyphosphate hydrolysis which occurs prior to release of AdoMet from the enzyme. The chain is S-adenosylmethionine synthase from Mycolicibacterium gilvum (strain PYR-GCK) (Mycobacterium gilvum (strain PYR-GCK)).